The following is a 778-amino-acid chain: GRIP and coiled-coil domain-containing protein 1 (778 aa).

Residues 13 to 61 adopt a coiled-coil conformation; the sequence is SKKDLLETIETQKKQLLQYQARLKDVVRAYKSLLKEKEALEASIKVLSV. Disordered stretches follow at residues 70 to 157, 186 to 208, and 617 to 638; these read SGVQ…MDKR, YLADKKKMKQDLEDANKKAEEER, and GRRSPVGGVGGGGLGDPADTAS. A compositionally biased stretch (basic and acidic residues) spans 83 to 93; that stretch reads VDDRCSTHSED. Composition is skewed to low complexity over residues 94 to 109 and 133 to 152; these read STGTATSLDTAASLTS and ASGSESGVSSSSGDGPSAGS. Residues 152-702 are a coiled coil; that stretch reads SEMDKRVHQL…EEGERHREEV (551 aa). One can recognise a GRIP domain in the interval 716-766; that stretch reads QSREGANLEYLKNIIYRFLTLPDSLGRQQTLTAILTILHFSPEEKQVLMRL.

Its subcellular location is the cytoplasm. It is found in the golgi apparatus membrane. Its function is as follows. Probably involved in maintaining Golgi structure. In Mus musculus (Mouse), this protein is GRIP and coiled-coil domain-containing protein 1 (Gcc1).